A 568-amino-acid chain; its full sequence is Acetate--CoA ligase CCL3 (568 aa).

Residues 204–212 (TSGTTASPK), 340–345 (HTYGLS), D437, 449–452 (IKDR), and K547 each bind ATP. Residues 272–340 (TAKGVYSAIA…MSEKGFKVAH (69 aa)) form an SBD1 region. Residues 341–417 (TYGLSETYGP…MRGNAVMKGY (77 aa)) form an SBD2 region.

This sequence belongs to the ATP-dependent AMP-binding enzyme family. As to expression, mostly expressed in glandular trichomes (lupulin glands) after flowering and in old leaves, and, to a lower extent, in stems, young leaves, cones and flowers.

The protein resides in the cytoplasm. The protein localises to the cytosol. It catalyses the reaction acetate + ATP + CoA = acetyl-CoA + AMP + diphosphate. It carries out the reaction propanoate + ATP + CoA = propanoyl-CoA + AMP + diphosphate. The enzyme catalyses butanoate + ATP + CoA = butanoyl-CoA + AMP + diphosphate. The catalysed reaction is 3-methylbutanoate + ATP + CoA = 3-methylbutanoyl-CoA + AMP + diphosphate. It catalyses the reaction pentanoate + ATP + CoA = pentanoyl-CoA + AMP + diphosphate. It carries out the reaction hexanoate + ATP + CoA = hexanoyl-CoA + AMP + diphosphate. The enzyme catalyses 2-methylpropanoate + ATP + CoA = 2-methylpropanoyl-CoA + AMP + diphosphate. The catalysed reaction is 2-methylbutanoate + ATP + CoA = 2-methylbutanoyl-CoA + AMP + diphosphate. It catalyses the reaction 2-methylpentanoate + ATP + CoA = 2-methylpentanoyl-CoA + AMP + diphosphate. It carries out the reaction 3-methylpentanoate + ATP + CoA = 3-methylpentanoyl-CoA + AMP + diphosphate. The enzyme catalyses 4-methylpentanoate + ATP + CoA = 4-methylpentanoyl-CoA + AMP + diphosphate. The protein operates within secondary metabolite biosynthesis. Its function is as follows. Involved in the biosynthesis of prenylated phenolics natural products which contribute to the bitter taste of beer and display broad biological activities. Catalyzes the ligation of CoA on propanoate to produce propanoyl-CoA. Can also use 2-methylpropanoate (isobutyric acid), acetate, butanoate, isovalerate, pentanoate, hexanoate, 2-methylbutanoate, 2-methylpentanoate, 3-methylpentanoate and 4-methylpentanoate as substrates with a lower efficiency. Triggers the formation of very short chain acyl-CoAs from the corresponding fatty acids, including acetic acid, propanoic acid, butyric acid and its isomer. This is Acetate--CoA ligase CCL3 from Humulus lupulus (European hop).